Here is a 351-residue protein sequence, read N- to C-terminus: Actin maturation protease (351 aa).

Residues 1-19 show a composition bias toward pro residues; it reads MTSPCSPPLKPPISPPKTP. Residues 1–70 form a disordered region; it reads MTSPCSPPLK…PPAATGPAPR (70 aa). The segment covering 36 to 50 has biased composition (low complexity); it reads LDFSALPSPPWSQQT. Positions 51-64 are enriched in pro residues; that stretch reads PVPPPLPLPPPPAA. The interval 124–244 is peptidase C39-like; that stretch reads SLIQEGPQCG…WAVSAGVLLG (121 aa). Residue Cys132 is part of the active site. Ser316 is subject to Phosphoserine.

This sequence belongs to the ACTMAP family. As to quaternary structure, interacts (via N-terminus) with PFN2 isoforms IIa and IIb; the interactions may facilitate efficient cleavage of the acetylated N-terminus of immature actin. Interacts with PFN1.

Its subcellular location is the cytoplasm. It catalyses the reaction N-terminal N(alpha)-acetyl-L-methionyl-L-aspartyl-[protein] + H2O = N-terminal L-aspartyl-[protein] + N-acetyl-L-methionine. The catalysed reaction is N-terminal N(alpha)-acetyl-L-methionyl-L-glutamyl-[protein] + H2O = N-terminal L-glutamyl-[protein] + N-acetyl-L-methionine. It carries out the reaction N-terminal N(alpha)-acetyl-L-cysteinyl-L-aspartyl-[protein] + H2O = N-terminal L-aspartyl-[protein] + N-acetyl-L-cysteine. The enzyme catalyses N-terminal N(alpha)-acetyl-L-cysteinyl-L-glutamyl-[protein] + H2O = N-terminal L-glutamyl-[protein] + N-acetyl-L-cysteine. In terms of biological role, actin maturation protease that specifically mediates the cleavage of immature acetylated N-terminal actin, thereby contributing to actin maturation. Cleaves N-terminal acetylated methionine of immature cytoplasmic beta- and gamma-actins ACTB and ACTG1 after translation. Cleaves N-terminal acetylated cysteine of muscle alpha-actins ACTA1, ACTC1 and ACTA2 after canonical removal of N-terminal methionine. This is Actin maturation protease from Homo sapiens (Human).